Consider the following 365-residue polypeptide: MWLQHLSLKTFRNYKETKIDFNPKLNVFLGRNAQGKTNMLEAIYFLALTRSHRTRTDKNLIHFDEEQLHLSGLVQKKTGSIPLEIELTQKGRVTKVNHLKQARLSDYVGHMNVVLFAPEDLQLIKGAPSIRRKFIDMELGQIKPIYLSDLTNYNHILKQRNTYLKSDQKIDETFLSVLDDQLVDYGCRVMNHRLDFIKKLESFGRKKHFELSNQIEELSISYQSSVNITDKQNLSESFKIALEKSRSRDLFKKNTGVGPHRDDISFYINGMDASFGSQGQHRSLVLSIKLAEIELMESITTESPILLLDDVMSELDNTRQLKLLETISQSIQTFITTTSLDHLQNLPENLSIFTIQDGKASVNGN.

Glycine 30–threonine 37 provides a ligand contact to ATP.

It belongs to the RecF family.

It localises to the cytoplasm. In terms of biological role, the RecF protein is involved in DNA metabolism; it is required for DNA replication and normal SOS inducibility. RecF binds preferentially to single-stranded, linear DNA. It also seems to bind ATP. This is DNA replication and repair protein RecF from Streptococcus pneumoniae (strain 70585).